Here is a 418-residue protein sequence, read N- to C-terminus: MLERSMNISDFDPELFDAIAKETARQEDHIELIASENYCSPRVLEAQGSQLTNKYAEGYPGKRYYGGCEHVDVVEQLAIDRANELFGSDYANVQPHAGSQANAAVFLALLNAGDTVLGMSLAHGGHLTHGSHVNFSGKLYNAIQYGLDETTGEIDYAQVEALALEHKPKMIIGGFSAYSGIVDWAKLREIADKIGAYFFVDMAHVAGLIAAGIYPSPVPHAHVVTTTTHKTLAGPRGGLIISACGDEAIYKKLNSAVFPGGQGGPLCHVIAAKAVAFKEALQPEFKVYQTQVVKNAQAMVAVMQERGYKIVSDKTENHLFLLDLINKDITGKDADAALGNAHITVNKNSVPNDPRSPFVTSGLRIGSPAITRRGFKEAESKELAGWICDVLDNINDESVQAQVREKVKAICAKLPVYA.

(6S)-5,6,7,8-tetrahydrofolate is bound by residues L121 and 125–127 (GHL). K230 is modified (N6-(pyridoxal phosphate)lysine). (6S)-5,6,7,8-tetrahydrofolate is bound at residue 356-358 (SPF).

This sequence belongs to the SHMT family. Homodimer. Pyridoxal 5'-phosphate serves as cofactor.

It localises to the cytoplasm. The enzyme catalyses (6R)-5,10-methylene-5,6,7,8-tetrahydrofolate + glycine + H2O = (6S)-5,6,7,8-tetrahydrofolate + L-serine. Its pathway is one-carbon metabolism; tetrahydrofolate interconversion. The protein operates within amino-acid biosynthesis; glycine biosynthesis; glycine from L-serine: step 1/1. Functionally, catalyzes the reversible interconversion of serine and glycine with tetrahydrofolate (THF) serving as the one-carbon carrier. This reaction serves as the major source of one-carbon groups required for the biosynthesis of purines, thymidylate, methionine, and other important biomolecules. Also exhibits THF-independent aldolase activity toward beta-hydroxyamino acids, producing glycine and aldehydes, via a retro-aldol mechanism. The sequence is that of Serine hydroxymethyltransferase from Pseudoalteromonas translucida (strain TAC 125).